The following is a 514-amino-acid chain: 2,3-bisphosphoglycerate-independent phosphoglycerate mutase (514 aa).

2 residues coordinate Mn(2+): aspartate 13 and serine 63. The active-site Phosphoserine intermediate is the serine 63. Residues histidine 124, 154 to 155, arginine 186, arginine 192, 258 to 261, and lysine 332 contribute to the substrate site; these read RD and RADR. Residues aspartate 399, histidine 403, aspartate 440, histidine 441, and histidine 459 each coordinate Mn(2+).

The protein belongs to the BPG-independent phosphoglycerate mutase family. In terms of assembly, monomer. Mn(2+) is required as a cofactor.

It carries out the reaction (2R)-2-phosphoglycerate = (2R)-3-phosphoglycerate. Its pathway is carbohydrate degradation; glycolysis; pyruvate from D-glyceraldehyde 3-phosphate: step 3/5. Catalyzes the interconversion of 2-phosphoglycerate and 3-phosphoglycerate. The chain is 2,3-bisphosphoglycerate-independent phosphoglycerate mutase from Legionella pneumophila subsp. pneumophila (strain Philadelphia 1 / ATCC 33152 / DSM 7513).